An 81-amino-acid polypeptide reads, in one-letter code: MGCNDKCGCAVPCPGGTGCRCTSARSDAAAGEHTTCGCGEHCGCNPCACGREGTPSGRANRRANCSCGAACNCASCGSTTA.

The protein belongs to the metallothionein superfamily. Type 15 family.

Binds 5 molecules of zinc. May have a role in Zn(2+) homeostasis during embryogenesis. This Triticum aestivum (Wheat) protein is EC protein III.